The sequence spans 37 residues: Cytochrome b6-f complex subunit 5 (37 aa).

A helical transmembrane segment spans residues 5–25; sequence LLSGIVLGMITVSALGLFVAA.

Belongs to the PetG family. In terms of assembly, the 4 large subunits of the cytochrome b6-f complex are cytochrome b6, subunit IV (17 kDa polypeptide, PetD), cytochrome f and the Rieske protein, while the 4 small subunits are PetG, PetL, PetM and PetN. The complex functions as a dimer.

It is found in the plastid. Its subcellular location is the chloroplast thylakoid membrane. Component of the cytochrome b6-f complex, which mediates electron transfer between photosystem II (PSII) and photosystem I (PSI), cyclic electron flow around PSI, and state transitions. PetG is required for either the stability or assembly of the cytochrome b6-f complex. The sequence is that of Cytochrome b6-f complex subunit 5 from Trieres chinensis (Marine centric diatom).